A 156-amino-acid chain; its full sequence is Endoribonuclease YbeY (156 aa).

Residues H105, H109, and D115 each coordinate Zn(2+).

The protein belongs to the endoribonuclease YbeY family. Zn(2+) serves as cofactor.

The protein localises to the cytoplasm. Functionally, single strand-specific metallo-endoribonuclease involved in late-stage 70S ribosome quality control and in maturation of the 3' terminus of the 16S rRNA. The chain is Endoribonuclease YbeY from Chlorobium chlorochromatii (strain CaD3).